Reading from the N-terminus, the 483-residue chain is Iroquois-class homeodomain protein IRX-5 (483 aa).

The segment at residues 113–175 is a DNA-binding region (homeobox; TALE-type); the sequence is DPAYRKNATR…NARRRLKKEN (63 aa). 2 disordered regions span residues 177 to 392 and 423 to 442; these read MTWT…QCPF and GHPGPGPGPTTGPGSHFNGL. Acidic residues predominate over residues 186 to 203; sequence EDEEEEENIDLEKNDEDE. Basic and acidic residues-rich tracts occupy residues 204-213 and 250-261; these read PQKPEDKGDP and SDFKEPPSEGRL. Composition is skewed to low complexity over residues 266–282 and 374–388; these read GPPRTGGPSPAGPAAAR and SRASPAPAPSRSPSA. Ser274 carries the phosphoserine modification. Ser464 bears the Phosphoserine mark.

Belongs to the TALE/IRO homeobox family.

Its subcellular location is the nucleus. Establishes the cardiac repolarization gradient by its repressive actions on the KCND2 potassium-channel gene. Required for retinal cone bipolar cell differentiation. May regulate contrast adaptation in the retina and control specific aspects of visual function in circuits of the mammalian retina. Could be involved in the regulation of both the cell cycle and apoptosis in prostate cancer cells. Involved in craniofacial and gonadal development. Modulates the migration of progenitor cell populations in branchial arches and gonads by repressing CXCL12. The sequence is that of Iroquois-class homeodomain protein IRX-5 (IRX5) from Homo sapiens (Human).